The sequence spans 1020 residues: Protein translocase subunit SecA (1020 aa).

ATP-binding positions include Q143, 161–165 (GEGKT), and D661. The segment at 974–1020 (SVYNASPGAENEAPLQRPVTADSKPGRNDPCPCGSGKKYKNCHGQQP) is disordered. 4 residues coordinate Zn(2+): C1004, C1006, C1015, and H1016.

It belongs to the SecA family. In terms of assembly, monomer and homodimer. Part of the essential Sec protein translocation apparatus which comprises SecA, SecYEG and auxiliary proteins SecDF. Other proteins may also be involved. Zn(2+) serves as cofactor.

It is found in the cell inner membrane. The protein localises to the cytoplasm. It carries out the reaction ATP + H2O + cellular proteinSide 1 = ADP + phosphate + cellular proteinSide 2.. In terms of biological role, part of the Sec protein translocase complex. Interacts with the SecYEG preprotein conducting channel. Has a central role in coupling the hydrolysis of ATP to the transfer of proteins into and across the cell membrane, serving as an ATP-driven molecular motor driving the stepwise translocation of polypeptide chains across the membrane. This is Protein translocase subunit SecA from Chlorobium phaeovibrioides (strain DSM 265 / 1930) (Prosthecochloris vibrioformis (strain DSM 265)).